The sequence spans 24 residues: Small ribosomal subunit protein uS5 (24 aa).

Belongs to the universal ribosomal protein uS5 family. As to quaternary structure, part of the 30S ribosomal subunit. Contacts proteins S4 and S8.

With S4 and S12 plays an important role in translational accuracy. In terms of biological role, located at the back of the 30S subunit body where it stabilizes the conformation of the head with respect to the body. The protein is Small ribosomal subunit protein uS5 (rpsE) of Vibrio proteolyticus (Aeromonas proteolytica).